A 135-amino-acid chain; its full sequence is uncharacterized protein (135 aa).

The next 2 helical transmembrane spans lie at 11–31 and 57–77; these read ILFFGLAFILVGFGLILGYLI and LGTAAAVAGGVIAGELITDAI.

It is found in the cell membrane. This is an uncharacterized protein from Methanocaldococcus jannaschii (strain ATCC 43067 / DSM 2661 / JAL-1 / JCM 10045 / NBRC 100440) (Methanococcus jannaschii).